Here is a 110-residue protein sequence, read N- to C-terminus: MSLTEARFHDLVDSTQQALEDIFDDSGLDVDLENSAGVLTVKFESGQQLIFSRQEPLRQLWLAARSGGVHFDYDEESGKWQCDKSEELLSEMLARLVSEYTGADLDFDEI.

Belongs to the frataxin family.

Functionally, involved in iron-sulfur (Fe-S) cluster assembly. May act as a regulator of Fe-S biogenesis. This Pseudomonas fluorescens (strain SBW25) protein is Iron-sulfur cluster assembly protein CyaY.